Here is a 215-residue protein sequence, read N- to C-terminus: Ribose-5-phosphate isomerase A (215 aa).

Residues 26–29 (TGST), 79–82 (DGAD), and 92–95 (KGGG) contribute to the substrate site. The Proton acceptor role is filled by Glu-101. Residue Lys-119 participates in substrate binding.

The protein belongs to the ribose 5-phosphate isomerase family. As to quaternary structure, homodimer.

It carries out the reaction aldehydo-D-ribose 5-phosphate = D-ribulose 5-phosphate. It functions in the pathway carbohydrate degradation; pentose phosphate pathway; D-ribose 5-phosphate from D-ribulose 5-phosphate (non-oxidative stage): step 1/1. Functionally, catalyzes the reversible conversion of ribose-5-phosphate to ribulose 5-phosphate. This chain is Ribose-5-phosphate isomerase A, found in Stenotrophomonas maltophilia (strain K279a).